The sequence spans 159 residues: Phosphopantetheine adenylyltransferase (159 aa).

Histidine 16 serves as a coordination point for ATP. The substrate site is built by lysine 40, methionine 72, and arginine 86. Residues 87 to 89 (GLR), glutamate 97, and 122 to 128 (YQYLSAS) each bind ATP.

Belongs to the bacterial CoaD family. As to quaternary structure, homohexamer. It depends on Mg(2+) as a cofactor.

The protein resides in the cytoplasm. The catalysed reaction is (R)-4'-phosphopantetheine + ATP + H(+) = 3'-dephospho-CoA + diphosphate. It functions in the pathway cofactor biosynthesis; coenzyme A biosynthesis; CoA from (R)-pantothenate: step 4/5. Reversibly transfers an adenylyl group from ATP to 4'-phosphopantetheine, yielding dephospho-CoA (dPCoA) and pyrophosphate. The sequence is that of Phosphopantetheine adenylyltransferase from Dehalococcoides mccartyi (strain ATCC BAA-2100 / JCM 16839 / KCTC 5957 / BAV1).